A 307-amino-acid polypeptide reads, in one-letter code: Agmatinase (307 aa).

Residues H128, D151, H153, D155, D232, and D234 each coordinate Mn(2+).

The protein belongs to the arginase family. Agmatinase subfamily. Mn(2+) serves as cofactor.

It catalyses the reaction agmatine + H2O = urea + putrescine. The protein operates within amine and polyamine biosynthesis; putrescine biosynthesis via agmatine pathway; putrescine from agmatine: step 1/1. Functionally, catalyzes the formation of putrescine from agmatine. The sequence is that of Agmatinase from Photorhabdus laumondii subsp. laumondii (strain DSM 15139 / CIP 105565 / TT01) (Photorhabdus luminescens subsp. laumondii).